The chain runs to 418 residues: Methylmalonic aciduria type A protein, mitochondrial (418 aa).

The transit peptide at 1 to 65 (MPMLLPHPHQ…LLSDGLKRKL (65 aa)) directs the protein to the mitochondrion. Residues 150–158 (GPPGAGKST), aspartate 292, and 328–330 (SAR) contribute to the GTP site.

The protein belongs to the SIMIBI class G3E GTPase family. ArgK/MeaB subfamily. In terms of assembly, homodimer. Interacts with MMUT (the apoenzyme form); the interaction is GTP dependent. In terms of tissue distribution, widely expressed. Highest expression is observed in liver and skeletal muscle.

Its subcellular location is the mitochondrion. The protein resides in the cytoplasm. The enzyme catalyses GTP + H2O = GDP + phosphate + H(+). With respect to regulation, GTPase activity is stimulated by MMUT. In terms of biological role, GTPase, binds and hydrolyzes GTP. Involved in intracellular vitamin B12 metabolism, mediates the transport of cobalamin (Cbl) into mitochondria for the final steps of adenosylcobalamin (AdoCbl) synthesis. Functions as a G-protein chaperone that assists AdoCbl cofactor delivery from MMAB to the methylmalonyl-CoA mutase (MMUT). Plays a dual role as both a protectase and a reactivase for MMUT. Protects MMUT from progressive inactivation by oxidation by decreasing the rate of the formation of the oxidized inactive cofactor hydroxocobalamin (OH2Cbl). Additionally acts a reactivase by promoting the replacement of OH2Cbl by the active cofactor AdoCbl, restoring the activity of MMUT in the presence and hydrolysis of GTP. The protein is Methylmalonic aciduria type A protein, mitochondrial of Homo sapiens (Human).